The primary structure comprises 1118 residues: cGMP-specific 3',5'-cyclic phosphodiesterase (1118 aa).

Residues 1–142 form a disordered region; sequence MTDVSSPAGG…KASTTASQQD (142 aa). Over residues 18-33 the composition is skewed to low complexity; sequence STTSSSSAATTSASSS. Polar residues predominate over residues 34–45; that stretch reads KPLTNGANKTAI. Composition is skewed to low complexity over residues 46-56 and 63-72; these read STAAGGVTPGA and GAIPASSSSG. Polar residues predominate over residues 84–101; it reads SNNNRPAVTNRSSETKLM. A compositionally biased stretch (low complexity) spans 102-128; it reads TPTGSSSSPSQSPSQTQASIQTQTSQQ. 2 GAF domains span residues 247–399 and 431–612; these read DIDV…GIGI and NLEC…GLGI. In terms of domain architecture, PDEase spans 642-965; it reads SQDQTEKLTQ…RNWQDLAEKV (324 aa). The active-site Proton donor is histidine 718. Histidine 722, histidine 758, aspartate 759, and aspartate 869 together coordinate a divalent metal cation. Disordered regions lie at residues 1006–1035 and 1065–1118; these read QQSQHGSEDSHTPEHQRSGSRLSMKKTGAL and SHVS…CALL. Basic and acidic residues-rich tracts occupy residues 1011–1022 and 1065–1075; these read GSEDSHTPEHQR and SHVSEDMDDKS. A compositionally biased stretch (low complexity) spans 1084-1104; sequence ASGSMGRMSASSSTSSAGGQM. The span at 1108 to 1118 shows a compositional bias: basic residues; it reads SKKRSKLCALL. Cysteine 1115 is subject to Cysteine methyl ester. Cysteine 1115 is lipidated: S-farnesyl cysteine. The propeptide at 1116–1118 is removed in mature form; sequence ALL.

The protein belongs to the cyclic nucleotide phosphodiesterase family. As to quaternary structure, interacts with PrBP. The cofactor is a divalent metal cation. As to expression, expressed in Malpighian tubule principal cells. Also expressed in adult head.

It localises to the cell membrane. The enzyme catalyses 3',5'-cyclic GMP + H2O = GMP + H(+). Its activity is regulated as follows. Inhibited by sildenafil and zaprinast. Hydrolyzes the second messenger cGMP, which is a key regulator of many important physiological processes. Has cAMP phosphodiesterase activity in vitro but not in vivo. Has a role regulating cGMP transport in Malpighian tubule principal cells. This chain is cGMP-specific 3',5'-cyclic phosphodiesterase (Pde6), found in Drosophila melanogaster (Fruit fly).